The following is a 104-amino-acid chain: Type VII secretion system extracellular protein B (104 aa).

The protein belongs to the WXG100 family. Homodimer. When mixed with EsxA does not form heterodimers.

The protein localises to the secreted. Virulence factor that is important for the establishment of infection in the host. EsxB is required for EsxA synthesis as well as secretion. Mediates together with EsxA the release of S.aureus from the host cell. Also inhibits host cytokine production and thus modulates dendritic cell-mediated immunity. The polypeptide is Type VII secretion system extracellular protein B (Staphylococcus aureus (strain Mu50 / ATCC 700699)).